We begin with the raw amino-acid sequence, 253 residues long: UPF0246 protein LBA1843 (253 aa).

The protein belongs to the UPF0246 family.

The protein is UPF0246 protein LBA1843 of Lactobacillus acidophilus (strain ATCC 700396 / NCK56 / N2 / NCFM).